The following is a 163-amino-acid chain: Centrosomal protein of 19 kDa (163 aa).

This sequence belongs to the CEP19 family. Interacts with CEP43; this interaction is required for its localization to the mother centriole. Interacts (via residues 121-150) with RABL2B. Interacts (via C-terminus) with CEP350; this interaction is required for its localization to the mother centriole.

It localises to the cytoplasm. The protein localises to the cytoskeleton. It is found in the microtubule organizing center. The protein resides in the centrosome. Its subcellular location is the centriole. It localises to the spindle pole. The protein localises to the cilium basal body. Required for ciliation. Recruits the RABL2B GTPase to the ciliary base to initiate ciliation. After specifically capturing the activated GTP-bound RABL2B, the CEP19-RABL2B complex binds intraflagellar transport (IFT) complex B from the large pool pre-docked at the base of the cilium and thus triggers its entry into the cilia. Involved in the early steps in cilia formation by recruiting the ciliary vesicles (CVs) to the distal end of the mother centriole where they fuse to initiate cilium assembly. Involved in microtubule (MT) anchoring at centrosomes. The protein is Centrosomal protein of 19 kDa (Cep19) of Rattus norvegicus (Rat).